The chain runs to 526 residues: ATP synthase subunit alpha 2 (526 aa).

171 to 178 (GDRQTGKT) is an ATP binding site.

Belongs to the ATPase alpha/beta chains family. In terms of assembly, F-type ATPases have 2 components, CF(1) - the catalytic core - and CF(0) - the membrane proton channel. CF(1) has five subunits: alpha(3), beta(3), gamma(1), delta(1), epsilon(1). CF(0) has four main subunits: a(1), b(1), b'(1) and c(9-12).

It is found in the cell inner membrane. The enzyme catalyses ATP + H2O + 4 H(+)(in) = ADP + phosphate + 5 H(+)(out). Its function is as follows. Produces ATP from ADP in the presence of a proton gradient across the membrane. The alpha chain is a regulatory subunit. The chain is ATP synthase subunit alpha 2 from Chlorobium luteolum (strain DSM 273 / BCRC 81028 / 2530) (Pelodictyon luteolum).